Consider the following 175-residue polypeptide: RNA pyrophosphohydrolase (175 aa).

Residues Gly6–Lys149 form the Nudix hydrolase domain. The short motif at Gly38–Gly59 is the Nudix box element.

This sequence belongs to the Nudix hydrolase family. RppH subfamily. A divalent metal cation is required as a cofactor.

Accelerates the degradation of transcripts by removing pyrophosphate from the 5'-end of triphosphorylated RNA, leading to a more labile monophosphorylated state that can stimulate subsequent ribonuclease cleavage. This Erwinia tasmaniensis (strain DSM 17950 / CFBP 7177 / CIP 109463 / NCPPB 4357 / Et1/99) protein is RNA pyrophosphohydrolase.